Consider the following 109-residue polypeptide: Ig kappa chain V region 3374 (109 aa).

Residues 1–24 are framework-1; that stretch reads ADIVMTQTPASVSAAVGGTVTINC. A complementarity-determining-1 region spans residues 25 to 35; that stretch reads QASQNIDSWLA. Positions 36–50 are framework-2; it reads WYQQKPGQPPKVLIY. Positions 51-57 are complementarity-determining-2; the sequence is RTSTLAS. Positions 58-89 are framework-3; it reads GVPSRFKGSRSGTEFTLTISDLECADAATYYC. The complementarity-determining-3 stretch occupies residues 90-98; the sequence is QSYYSISSA. The segment at 99–108 is framework-4; it reads FGGGTEVVVK.

The polypeptide is Ig kappa chain V region 3374 (Oryctolagus cuniculus (Rabbit)).